The primary structure comprises 103 residues: Small ribosomal subunit protein uS10 (103 aa).

Belongs to the universal ribosomal protein uS10 family. Part of the 30S ribosomal subunit.

In terms of biological role, involved in the binding of tRNA to the ribosomes. In Neisseria gonorrhoeae (strain NCCP11945), this protein is Small ribosomal subunit protein uS10.